The chain runs to 555 residues: Dihydroxy-acid dehydratase (555 aa).

Asp78 contributes to the Mg(2+) binding site. A [2Fe-2S] cluster-binding site is contributed by Cys119. Asp120 and Lys121 together coordinate Mg(2+). Lys121 is subject to N6-carboxylysine. Cys191 contacts [2Fe-2S] cluster. Glu444 contacts Mg(2+). Ser470 acts as the Proton acceptor in catalysis.

This sequence belongs to the IlvD/Edd family. As to quaternary structure, homodimer. [2Fe-2S] cluster serves as cofactor. It depends on Mg(2+) as a cofactor.

It carries out the reaction (2R)-2,3-dihydroxy-3-methylbutanoate = 3-methyl-2-oxobutanoate + H2O. The catalysed reaction is (2R,3R)-2,3-dihydroxy-3-methylpentanoate = (S)-3-methyl-2-oxopentanoate + H2O. Its pathway is amino-acid biosynthesis; L-isoleucine biosynthesis; L-isoleucine from 2-oxobutanoate: step 3/4. The protein operates within amino-acid biosynthesis; L-valine biosynthesis; L-valine from pyruvate: step 3/4. Functionally, functions in the biosynthesis of branched-chain amino acids. Catalyzes the dehydration of (2R,3R)-2,3-dihydroxy-3-methylpentanoate (2,3-dihydroxy-3-methylvalerate) into 2-oxo-3-methylpentanoate (2-oxo-3-methylvalerate) and of (2R)-2,3-dihydroxy-3-methylbutanoate (2,3-dihydroxyisovalerate) into 2-oxo-3-methylbutanoate (2-oxoisovalerate), the penultimate precursor to L-isoleucine and L-valine, respectively. The polypeptide is Dihydroxy-acid dehydratase (Oleidesulfovibrio alaskensis (strain ATCC BAA-1058 / DSM 17464 / G20) (Desulfovibrio alaskensis)).